Consider the following 209-residue polypeptide: Large ribosomal subunit protein uL3c (209 aa).

Residues Pro132–Arg154 form a disordered region.

It belongs to the universal ribosomal protein uL3 family. As to quaternary structure, part of the 50S ribosomal subunit.

Its subcellular location is the plastid. The protein localises to the cyanelle. Its function is as follows. One of the primary rRNA binding proteins, it binds directly near the 3'-end of the 23S rRNA, where it nucleates assembly of the 50S subunit. The polypeptide is Large ribosomal subunit protein uL3c (rpl3) (Cyanophora paradoxa).